We begin with the raw amino-acid sequence, 487 residues long: Glutamyl-tRNA(Gln) amidotransferase subunit A (487 aa).

Residues lysine 79 and serine 158 each act as charge relay system in the active site. Catalysis depends on serine 182, which acts as the Acyl-ester intermediate.

This sequence belongs to the amidase family. GatA subfamily. As to quaternary structure, heterotrimer of A, B and C subunits.

The enzyme catalyses L-glutamyl-tRNA(Gln) + L-glutamine + ATP + H2O = L-glutaminyl-tRNA(Gln) + L-glutamate + ADP + phosphate + H(+). Allows the formation of correctly charged Gln-tRNA(Gln) through the transamidation of misacylated Glu-tRNA(Gln) in organisms which lack glutaminyl-tRNA synthetase. The reaction takes place in the presence of glutamine and ATP through an activated gamma-phospho-Glu-tRNA(Gln). This chain is Glutamyl-tRNA(Gln) amidotransferase subunit A, found in Ehrlichia chaffeensis (strain ATCC CRL-10679 / Arkansas).